A 122-amino-acid polypeptide reads, in one-letter code: Large ribosomal subunit protein uL14 (122 aa).

It belongs to the universal ribosomal protein uL14 family. As to quaternary structure, part of the 50S ribosomal subunit. Forms a cluster with proteins L3 and L19. In the 70S ribosome, L14 and L19 interact and together make contacts with the 16S rRNA in bridges B5 and B8.

Functionally, binds to 23S rRNA. Forms part of two intersubunit bridges in the 70S ribosome. The protein is Large ribosomal subunit protein uL14 of Rhodopseudomonas palustris (strain HaA2).